The chain runs to 398 residues: Organelle RRM domain-containing protein 1, chloroplastic (398 aa).

Residues 1 to 88 constitute a chloroplast transit peptide; it reads MDTALPSVLI…RWVVVMDTPP (88 aa). Over residues 54–70 the composition is skewed to low complexity; sequence LLASSSESPPAQLAAAS. Positions 54-79 are disordered; sequence LLASSSESPPAQLAAASTESQSRSSR. One can recognise an RRM domain in the interval 299-377; sequence KRLFVTGLSF…WMIVVDVAKT (79 aa).

Its subcellular location is the plastid. The protein resides in the chloroplast. In terms of biological role, involved in C-to-U editing of chloroplastic RNA. Functions as major chloroplastic editing factor. Controls a majority of the chloroplastic editing sites. The chain is Organelle RRM domain-containing protein 1, chloroplastic (ORRM1) from Zea mays (Maize).